Reading from the N-terminus, the 348-residue chain is Rhodopsin (348 aa).

An N-acetylmethionine modification is found at Met-1. Residues 1–36 (MNGTEGPNFYVPFSNATGVVRSPFEYPQYYLAEPWQ) are Extracellular-facing. N-linked (GlcNAc...) asparagine glycosylation is found at Asn-2 and Asn-15. Residues 37-61 (FSMLAAYMFMLIVLGFPINFLTLYV) form a helical membrane-spanning segment. Residues 62–73 (TVQHKKLRTPLN) lie on the Cytoplasmic side of the membrane. The helical transmembrane segment at 74–96 (YILLNLAVADLFMVFGGFTTTLY) threads the bilayer. At 97 to 110 (TSLHGYFVFGPTGC) the chain is on the extracellular side. An intrachain disulfide couples Cys-110 to Cys-187. Residues 111 to 133 (NLEGFFATLGGEIALWSLVVLAI) form a helical membrane-spanning segment. Residues 134-136 (ERY) carry the 'Ionic lock' involved in activated form stabilization motif. Residues 134–152 (ERYVVVCKPMSNFRFGENH) lie on the Cytoplasmic side of the membrane. A helical membrane pass occupies residues 153-173 (AIMGLVFTWIMALACAAPPLV). At 174–202 (GWSRYIPEGMQCSCGIDYYTLKPEVNNES) the chain is on the extracellular side. Glu-201 lines the Zn(2+) pocket. A helical transmembrane segment spans residues 203–224 (FVIYMFVVHFFIPLFVIFFCYG). The Cytoplasmic portion of the chain corresponds to 225-252 (QLVFTVKEAAAQQQESATTQKAEKEVTR). A helical transmembrane segment spans residues 253 to 274 (MVIIMVIAFLICWLPYAGVAFY). The Extracellular portion of the chain corresponds to 275–286 (IFTHQGSNFGPI). Gln-279 lines the Zn(2+) pocket. The chain crosses the membrane as a helical span at residues 287 to 308 (FMTLPAFFAKTASIYNPVIYIM). Lys-296 is subject to N6-(retinylidene)lysine. The Cytoplasmic portion of the chain corresponds to 309-348 (MNKQFRTCMITTLCCGKNPLGDDEASTTASKTETSQVAPA). Residues Cys-322 and Cys-323 are each lipidated (S-palmitoyl cysteine). An interaction with SAG region spans residues 330–348 (DDEASTTASKTETSQVAPA). The residue at position 334 (Ser-334) is a Phosphoserine. A phosphothreonine mark is found at Thr-335 and Thr-336. Ser-338 carries the post-translational modification Phosphoserine. Phosphothreonine occurs at positions 340 and 342. Ser-343 is modified (phosphoserine).

The protein belongs to the G-protein coupled receptor 1 family. Opsin subfamily. In terms of assembly, homodimer. May form a complex composed of RHO, GRK1 and RCVRN in a Ca(2+)-dependent manner; RCVRN prevents the interaction between GRK1 and RHO. Interacts with GRK1. Interacts (phosphorylated form) with SAG. Interacts with GNAT1. Interacts with GNAT3. SAG and G-proteins compete for a common binding site. Interacts with PRCD; the interaction promotes PRCD stability. Forms a complex with ASAP1 and ARF4. Forms a complex with ASAP1, RAB11A, Rabin8/RAB3IP, ARF4 and RAB11FIP3; the complex regulates Golgi-to-cilia rhodopsin/RHO transport in photoreceptors. Post-translationally, phosphorylated on some or all of the serine and threonine residues present in the C-terminal region. Contains one covalently linked retinal chromophore. Upon light absorption, the covalently bound 11-cis-retinal is converted to all-trans-retinal. After hydrolysis of the Schiff base and release of the covalently bound all-trans-retinal, active rhodopsin is regenerated by binding of a fresh molecule of 11-cis-retinal.

The protein resides in the membrane. It localises to the cell projection. The protein localises to the cilium. It is found in the photoreceptor outer segment. In terms of biological role, photoreceptor required for image-forming vision at low light intensity. Required for photoreceptor cell viability after birth. Light-induced isomerization of 11-cis to all-trans retinal triggers a conformational change that activates signaling via G-proteins. Subsequent receptor phosphorylation mediates displacement of the bound G-protein alpha subunit by the arrestin SAG and terminates signaling. The sequence is that of Rhodopsin (RHO) from Otolemur crassicaudatus (Brown greater galago).